Here is a 155-residue protein sequence, read N- to C-terminus: Small ribosomal subunit protein uS7cz/uS7cy (155 aa).

This sequence belongs to the universal ribosomal protein uS7 family. Part of the 30S ribosomal subunit.

It is found in the plastid. The protein localises to the chloroplast. In terms of biological role, one of the primary rRNA binding proteins, it binds directly to 16S rRNA where it nucleates assembly of the head domain of the 30S subunit. This chain is Small ribosomal subunit protein uS7cz/uS7cy (rps7-A), found in Oenothera argillicola (Appalachian evening primrose).